Reading from the N-terminus, the 478-residue chain is Hepatitis A virus cellular receptor 1 (478 aa).

A signal peptide spans 1-24 (MADPIMHLQVVILSLILHLADSVA). One can recognise an Ig-like V-type domain in the interval 25-126 (DSVNVDGVAG…WFNDMKITIS (102 aa)). At 25–397 (DSVNVDGVAG…SPQMVNTTEG (373 aa)) the chain is on the extracellular side. Disulfide bonds link C41-C110, C51-C62, and C57-C109. 2 N-linked (GlcNAc...) asparagine glycosylation sites follow: N70 and N87. A run of 28 repeats spans residues 148–155 (VPTTTTTT), 156–161 (LPTTTT), 162–167 (LPTTTT), 168–173 (LPTTMT), 174–179 (LPTTTT), 180–185 (LPMTTT), 186–191 (LPTTTT), 192–197 (VPMTTT), 198–201 (LPTT), 202–207 (LPTTTT), 208–211 (LPTT), 212–217 (LPTTTT), 218–221 (LPTT), 222–227 (LPTTTT), 228–233 (LPTTMT), 234–239 (LPMTTT), 240–245 (LPTTTT), 246–251 (LPTTTT), 252–257 (LPTTTT), 258–263 (LPTTTT), 264–268 (LPTTT), 269–273 (LPTMT), 274–279 (LPTTTT), 280–285 (LPTTMT), 286–291 (LPMTTT), 292–297 (LPTTTT), 298–303 (LPTTTT), and 304–309 (LPTTTM). Residues 148 to 309 (VPTTTTTTLP…TTTTLPTTTM (162 aa)) form a 28 X 6 AA approximate tandem repeats of L-P-[MT]-T-[MT]-T region. Positions 187-303 (PTTTTVPMTT…TTTTLPTTTT (117 aa)) are disordered. Disordered regions lie at residues 320–339 (PMQD…PAET) and 344–370 (LLGA…TVTE). The segment covering 348 to 370 (TRTQPTSSPLYSYTTDGSDTVTE) has biased composition (polar residues). 2 N-linked (GlcNAc...) asparagine glycosylation sites follow: N379 and N393. The helical transmembrane segment at 398-418 (IYAGVCISVLVLLAVLGVVIA) threads the bilayer. Residues 419 to 478 (KKYFFKKEIQQLSVSFSNHQFKTLQNAVKKEVHAEDNIYIENNLYAMNQDPVVLFESLRP) are Cytoplasmic-facing.

The protein belongs to the immunoglobulin superfamily. TIM family. In terms of assembly, interacts with STAM. Interacts with SELPLG.

The protein localises to the cell membrane. Phosphatidylserine receptor that plays an important functional role in regulatory B-cells homeostasis including generation, expansion and suppressor functions. As P-selectin/SELPLG ligand, plays a specialized role in activated but not naive T-cell trafficking during inflammatory responses. Controls thereby T-cell accumulation in the inflamed central nervous system (CNS) and the induction of autoimmune disease. Also regulates expression of various anti-inflammatory cytokines and co-inhibitory ligands including IL10. Acts as a regulator of T-cell proliferation. May play a role in kidney injury and repair. The sequence is that of Hepatitis A virus cellular receptor 1 (HAVCR1) from Chlorocebus aethiops (Green monkey).